Consider the following 565-residue polypeptide: NAD-dependent malic enzyme (565 aa).

The Proton donor role is filled by Tyr-104. Arg-157 provides a ligand contact to NAD(+). Lys-175 functions as the Proton acceptor in the catalytic mechanism. The a divalent metal cation site is built by Glu-246, Asp-247, and Asp-270. NAD(+) contacts are provided by Asp-270 and Asn-418.

Belongs to the malic enzymes family. As to quaternary structure, homotetramer. The cofactor is Mg(2+). Mn(2+) serves as cofactor.

It catalyses the reaction (S)-malate + NAD(+) = pyruvate + CO2 + NADH. The catalysed reaction is oxaloacetate + H(+) = pyruvate + CO2. This Sodalis glossinidius (strain morsitans) protein is NAD-dependent malic enzyme.